Consider the following 73-residue polypeptide: UPF0154 protein LJ_1506 (73 aa).

Residues L3–Y23 form a helical membrane-spanning segment.

This sequence belongs to the UPF0154 family.

It is found in the cell membrane. The sequence is that of UPF0154 protein LJ_1506 from Lactobacillus johnsonii (strain CNCM I-12250 / La1 / NCC 533).